Consider the following 80-residue polypeptide: Acyl carrier protein (80 aa).

The Carrier domain occupies 4 to 79 (EAILEKVRSI…DAVKYIEDKQ (76 aa)). Position 39 is an O-(pantetheine 4'-phosphoryl)serine (Ser39).

This sequence belongs to the acyl carrier protein (ACP) family. In terms of processing, 4'-phosphopantetheine is transferred from CoA to a specific serine of apo-ACP by AcpS. This modification is essential for activity because fatty acids are bound in thioester linkage to the sulfhydryl of the prosthetic group.

The protein localises to the cytoplasm. It participates in lipid metabolism; fatty acid biosynthesis. Its function is as follows. Carrier of the growing fatty acid chain in fatty acid biosynthesis. This Prochlorococcus marinus (strain SARG / CCMP1375 / SS120) protein is Acyl carrier protein.